A 403-amino-acid chain; its full sequence is Ribosomal RNA large subunit methyltransferase I (403 aa).

In terms of domain architecture, PUA spans 9–88 (YPRLVLSKGR…ESIDIAFFTR (80 aa)).

The protein belongs to the methyltransferase superfamily. RlmI family.

It is found in the cytoplasm. It carries out the reaction cytidine(1962) in 23S rRNA + S-adenosyl-L-methionine = 5-methylcytidine(1962) in 23S rRNA + S-adenosyl-L-homocysteine + H(+). Specifically methylates the cytosine at position 1962 (m5C1962) of 23S rRNA. The chain is Ribosomal RNA large subunit methyltransferase I from Salmonella newport (strain SL254).